Reading from the N-terminus, the 161-residue chain is Putative 4-hydroxy-4-methyl-2-oxoglutarate aldolase (161 aa).

Residues 75-78 (GDQL) and R97 each bind substrate. An a divalent metal cation-binding site is contributed by D98.

The protein belongs to the class II aldolase/RraA-like family. Homotrimer. A divalent metal cation serves as cofactor.

It carries out the reaction 4-hydroxy-4-methyl-2-oxoglutarate = 2 pyruvate. The catalysed reaction is oxaloacetate + H(+) = pyruvate + CO2. Catalyzes the aldol cleavage of 4-hydroxy-4-methyl-2-oxoglutarate (HMG) into 2 molecules of pyruvate. Also contains a secondary oxaloacetate (OAA) decarboxylase activity due to the common pyruvate enolate transition state formed following C-C bond cleavage in the retro-aldol and decarboxylation reactions. The chain is Putative 4-hydroxy-4-methyl-2-oxoglutarate aldolase from Vibrio cholerae serotype O1 (strain ATCC 39315 / El Tor Inaba N16961).